Consider the following 650-residue polypeptide: MSEAHIYPVKENIKAHTHADNDTYLAMYQQSVTDPERFWSEHGKIVDWIKPFTKVKQTSFDTGHVDIRWFEDGTLNVSANCIDRHLAERGDDVAIIWEGDNPEDDKTLTYNELYTEVCRFSNALKEQGVRKGDVVCLYMPMVPEAAVAMLACTRIGAVHTIVFGGFSPEALAGRIIDSDAKVVITADEGVRGGRAVPLKKNVDEALTNPEVKTISKVVVFKRTGGNIDWHEHRDVWWHEATAKVSDVCPPEEMKAEDPLFILYTSGSTGKPKGVLHTTGGYLVYATMTFKYVFDYQPGETFWCTADVGWITGHTYLVYGPLANGAKTILFEGVPNYPNTSRMSEVVDKHQVNILYTAPTAIRALMAKGNEAIEGTDRSSLRIMGSVGEPINPEAWEWYYKTIGNEKSPIVDTWWQTETGGILITPLPGATALKPGSATRPFFGVQPALVDNMGNVIEDQAAEGNLVILDSWPGQMRTVYGDHERFEQTYFSTFKGMYFTGDGARRDEDGYYWITGRVDDVLNVSGHRMGTAEIESALVAHPKIAEAAIVGIPHDIKGQAIYAYVTLNAGEYPTAELHKEVKDWVRKEIGPIATPDVLHWTDALPKTRSGKIMRRILRKIATGDTSNLGDTSTLADPSVVDKLIAEKAELV.

Residues 191 to 194 (RGGR), Thr-311, and Asn-335 contribute to the CoA site. Residues 387–389 (GEP), 411–416 (DTWWQT), Asp-501, and Arg-516 contribute to the ATP site. A CoA-binding site is contributed by Ser-524. Residue Arg-527 coordinates ATP. Positions 538, 540, and 543 each coordinate Mg(2+). Arg-585 is a binding site for CoA. Lys-610 carries the N6-acetyllysine modification.

Belongs to the ATP-dependent AMP-binding enzyme family. Requires Mg(2+) as cofactor. In terms of processing, acetylated. Deacetylation by the SIR2-homolog deacetylase activates the enzyme.

The enzyme catalyses acetate + ATP + CoA = acetyl-CoA + AMP + diphosphate. Its function is as follows. Catalyzes the conversion of acetate into acetyl-CoA (AcCoA), an essential intermediate at the junction of anabolic and catabolic pathways. AcsA undergoes a two-step reaction. In the first half reaction, AcsA combines acetate with ATP to form acetyl-adenylate (AcAMP) intermediate. In the second half reaction, it can then transfer the acetyl group from AcAMP to the sulfhydryl group of CoA, forming the product AcCoA. This chain is Acetyl-coenzyme A synthetase, found in Vibrio vulnificus (strain CMCP6).